Reading from the N-terminus, the 394-residue chain is Fatty acid resistance protein FarA (394 aa).

The tract at residues 1 to 23 is disordered; it reads MKSGNSEPNLMETHTDETKLQNT. The helical transmembrane segment at 33-53 threads the bilayer; that stretch reads ALTLLFALSAAAAGSAFFLWW. Residues 356–376 form a disordered region; sequence SAAGAPVSKTPGAALPEMEST.

Belongs to the membrane fusion protein (MFP) (TC 8.A.1) family. In terms of assembly, probably part of a tripartite efflux system FarAB-MtrE, which is composed of an inner membrane transporter, FarB, a periplasmic membrane fusion protein, FarA, and an outer membrane component, MtrE.

It localises to the cell inner membrane. In terms of biological role, mediates resistance to long-chained antibacterial fatty acids (FAs). Function is dependent on the MtrE outer membrane protein. This Neisseria gonorrhoeae protein is Fatty acid resistance protein FarA.